Reading from the N-terminus, the 162-residue chain is UPF0305 protein MmarC5_0909 (162 aa).

The protein belongs to the UPF0305 family.

This chain is UPF0305 protein MmarC5_0909, found in Methanococcus maripaludis (strain C5 / ATCC BAA-1333).